The following is a 99-amino-acid chain: Small ribosomal subunit protein uS17 (99 aa).

This sequence belongs to the universal ribosomal protein uS17 family. Part of the 30S ribosomal subunit.

In terms of biological role, one of the primary rRNA binding proteins, it binds specifically to the 5'-end of 16S ribosomal RNA. The protein is Small ribosomal subunit protein uS17 of Thermosipho melanesiensis (strain DSM 12029 / CIP 104789 / BI429).